Reading from the N-terminus, the 382-residue chain is Putative 12-oxophytodienoate reductase 3 (382 aa).

FMN is bound by residues 37–39 (PLT), A70, and Q112. Over residues 120–138 (STNDQQPNGQAPISSTDKQ) the composition is skewed to polar residues. The interval 120-147 (STNDQQPNGQAPISSTDKQITPDDSHTV) is disordered. 184–187 (HGAH) is a substrate binding site. Catalysis depends on Y189, which acts as the Proton donor. R236 is an FMN binding site. R277 is a substrate binding site. FMN-binding positions include G307 and 328–329 (GR).

It belongs to the NADH:flavin oxidoreductase/NADH oxidase family. FMN is required as a cofactor.

Its function is as follows. Putative oxophytodienoate reductase that may be involved in the biosynthesis or metabolism of oxylipin signaling molecules. In Oryza sativa subsp. japonica (Rice), this protein is Putative 12-oxophytodienoate reductase 3 (OPR3).